A 207-amino-acid polypeptide reads, in one-letter code: Probable molybdenum cofactor guanylyltransferase (207 aa).

GTP is bound by residues 9–11 (LAG), Lys-21, and Asp-97. Asp-97 contributes to the Mg(2+) binding site.

The protein belongs to the MobA family. Mg(2+) is required as a cofactor.

It localises to the cytoplasm. The catalysed reaction is Mo-molybdopterin + GTP + H(+) = Mo-molybdopterin guanine dinucleotide + diphosphate. Transfers a GMP moiety from GTP to Mo-molybdopterin (Mo-MPT) cofactor (Moco or molybdenum cofactor) to form Mo-molybdopterin guanine dinucleotide (Mo-MGD) cofactor. The sequence is that of Probable molybdenum cofactor guanylyltransferase from Trichormus variabilis (strain ATCC 29413 / PCC 7937) (Anabaena variabilis).